Reading from the N-terminus, the 144-residue chain is MESPLGSDLARLVRVWRALIDHRLKPLELTQTHWVTLHNIHQLPPEQSQIQLAKAIGIEQPSLVRTLDQLEEKGLISRQTCSSDRRAKRIKLTEKAEPLINEMEEVIGKTRDEILSGVSKQEVETLLHLIRKLEQNILDLQAKD.

Residues 2 to 135 form the HTH marR-type domain; sequence ESPLGSDLAR…LLHLIRKLEQ (134 aa). The H-T-H motif DNA-binding region spans 49 to 72; it reads QIQLAKAIGIEQPSLVRTLDQLEE.

The protein belongs to the SlyA family. In terms of assembly, homodimer.

In terms of biological role, transcription regulator that can specifically activate or repress expression of target genes. The protein is Transcriptional regulator SlyA of Klebsiella pneumoniae (strain 342).